A 441-amino-acid chain; its full sequence is Ribosomal protein uS12 methylthiotransferase RimO (441 aa).

Positions 8–118 (PKIGFVSLGC…VLEHVHHYTP (111 aa)) constitute an MTTase N-terminal domain. The [4Fe-4S] cluster site is built by Cys-17, Cys-53, Cys-82, Cys-150, Cys-154, and Cys-157. One can recognise a Radical SAM core domain in the interval 136 to 373 (LTPRHYAYLK…MQLQQQISAE (238 aa)). Positions 376-441 (QEKVGREILV…DEYDLWGTRV (66 aa)) constitute a TRAM domain.

This sequence belongs to the methylthiotransferase family. RimO subfamily. Requires [4Fe-4S] cluster as cofactor.

Its subcellular location is the cytoplasm. It carries out the reaction L-aspartate(89)-[ribosomal protein uS12]-hydrogen + (sulfur carrier)-SH + AH2 + 2 S-adenosyl-L-methionine = 3-methylsulfanyl-L-aspartate(89)-[ribosomal protein uS12]-hydrogen + (sulfur carrier)-H + 5'-deoxyadenosine + L-methionine + A + S-adenosyl-L-homocysteine + 2 H(+). Catalyzes the methylthiolation of an aspartic acid residue of ribosomal protein uS12. The sequence is that of Ribosomal protein uS12 methylthiotransferase RimO from Klebsiella pneumoniae subsp. pneumoniae (strain ATCC 700721 / MGH 78578).